Consider the following 1274-residue polypeptide: Paired amphipathic helix protein Sin3a (1274 aa).

Disordered stretches follow at residues 1–26 (MKRRLDDQESPVYAAQQRRIPGSTEA) and 85–110 (HHHPTAVQPHGGQVVQSHAHPAPPVA). S10 carries the post-translational modification Phosphoserine. One can recognise a PAH 1 domain in the interval 119–189 (QRLKVEDALS…MGFNTFLPPG (71 aa)). Residues 119–196 (QRLKVEDALS…PPGYKIEVQT (78 aa)) form an interaction with HCFC1 region. Glycyl lysine isopeptide (Lys-Gly) (interchain with G-Cter in SUMO2) cross-links involve residues K122 and K134. The disordered stretch occupies residues 205 to 297 (PGQVHQIPTH…ISLGTAPSLQ (93 aa)). Residues 205–479 (PGQVHQIPTH…KVRKALRSAE (275 aa)) are interaction with REST. Residues 228–237 (SQPSSQSAPT) show a composition bias toward low complexity. The span at 252–266 (KPSQLQAHTPASQQT) shows a compositional bias: polar residues. Pro residues predominate over residues 267–282 (PPLPPYASPRSPPVQP). S277 is modified (phosphoserine). The residue at position 284 (T284) is a Phosphothreonine. Residues 284-297 (TPVTISLGTAPSLQ) show a composition bias toward polar residues. Positions 300-383 (QPVEFNHAIN…SEFGQFLPDA (84 aa)) constitute a PAH 2 domain. The segment at 398–443 (DSVRNDHGGTVKKPQLNNKPQRPSQNGCQIRRHSGTGATPPVKKKP) is disordered. The segment covering 412 to 425 (QLNNKPQRPSQNGC) has biased composition (polar residues). A PAH 3 domain is found at 457–526 (SKHGVGTESL…NWFKNFLGYK (70 aa)). Positions 459-526 (HGVGTESLFF…NWFKNFLGYK (68 aa)) are interaction with SAP30. Position 470 is an N6-acetyllysine (K470). The segment at 524-851 (GYKESVHLES…EMDVDEATGA (328 aa)) is interaction with NCOR1. The segment at 525-660 (YKESVHLESF…KFRLDNTLGG (136 aa)) is interactions with SUDS3 and SAP130. Residue K564 forms a Glycyl lysine isopeptide (Lys-Gly) (interchain with G-Cter in SUMO2) linkage. Residues 688–830 (NPSIAVPIVL…IPDLLFAQRG (143 aa)) are interactions with HDAC1 and ARID4B. At S833 the chain carries Phosphoserine. Residues 835–847 (VEEEEEEEMDVDE) are compositionally biased toward acidic residues. The interval 835–865 (VEEEEEEEMDVDEATGAPKKHNGVGGSPPKS) is disordered. S861 carries the phosphoserine modification. Residues K866 and K876 each carry the N6-acetyllysine modification. An interaction with OGT region spans residues 889-968 (VNNNWYIFMR…YYPAFLDMVR (80 aa)). Residues 904–933 (CLRLLRICSQAERQIEEENREREWEREVLG) adopt a coiled-coil conformation. S941, S1090, and S1113 each carry phosphoserine. Residues 1137–1157 (CQRGREQQEKEGKEGNSKKTM) are disordered. Positions 1139-1157 (RGREQQEKEGKEGNSKKTM) are enriched in basic and acidic residues.

Interacts with ARID4B, BRMS1L, HCFC1, HDAC1, HDAC2, MXI1, SAP30L, SAP130, SFPQ and TOPORS. Interacts with OGT (via TPRs 1-6); the interaction mediates transcriptional repression in parallel with histone deacetylase. Interacts with BAZ2A, MXD1, MXD3, MXD4, MBD2, DACH1, NCOR1, NR4A2, REST, RLIM, SAP30, SETDB1, SMYD2, and SUDS3. Interacts with PHF12 in a complex composed of HDAC1, PHF12 and SAP30. Interacts with TET1; the interaction recruits SIN3A to gene promoters. The large PER complex involved in the histone deacetylation is composed of at least HDAC1, PER2, SFPQ and SIN3A. Interacts with KLF11. Interacts with PPHLN1. Found in a complex with YY1, GON4L and HDAC1. Interacts (via PAH2) with FOXK1. Interacts with FOXK2. Found in a complex composed of at least SINHCAF, SIN3A, HDAC1, SAP30, RBBP4, OGT and TET1. Interacts with SINHCAF. Interacts with SPHK2. Post-translationally, SUMO1 sumoylated by TOPORS. Probably desumoylated by SENP2. Widely expressed. Highest levels in testis, lung and thymus. Expressed at relatively high levels throughout brain development. In adult mice, expression is high in neurogenic regions such as the subventricular zone, rostral migratory stream, olfactory bulb and dentate gyrus.

Its subcellular location is the nucleus. The protein localises to the nucleolus. In terms of biological role, acts as a transcriptional repressor. Corepressor for REST. Interacts with MXI1 to repress MYC responsive genes and antagonize MYC oncogenic activities. Also interacts with MXD1-MAX heterodimers to repress transcription by tethering SIN3A to DNA. Acts cooperatively with OGT to repress transcription in parallel with histone deacetylation. Involved in the control of the circadian rhythms. Required for the transcriptional repression of circadian target genes, such as PER1, mediated by the large PER complex through histone deacetylation. Cooperates with FOXK1 to regulate cell cycle progression probably by repressing cell cycle inhibitor genes expression. Required for cortical neuron differentiation and callosal axon elongation. This is Paired amphipathic helix protein Sin3a (Sin3a) from Mus musculus (Mouse).